The following is a 698-amino-acid chain: G1/S-specific cyclin CCN1 (698 aa).

Over residues 1–11 (MTSLQQQQQQQ) the composition is skewed to low complexity. Disordered regions lie at residues 1-21 (MTSLQQQQQQQRVKYGPPHHI), 277-326 (QKKQ…DDED), 469-577 (DEDE…GSIL), 599-619 (SNSSNINIHHGHHNTKQEKRY), and 659-698 (NNTNSSSPLMNQQQQYYHQQQHQQQVTQSSLYQHHHQYHQ). The span at 277-302 (QKKQKKAFSSNSSRTTTASYTHQNQS) shows a compositional bias: polar residues. Composition is skewed to acidic residues over residues 310-326 (DEDIDLDSGDEGDDDED) and 469-480 (DEDENVSTDDEA). Composition is skewed to polar residues over residues 493 to 520 (DGNNQLFTPKSPNAFSSNSSLTLNNHPQ) and 528 to 567 (PSATSQYSLFSNKNNRTHESTSGLNSTCNTPTHISISSFA). Residues 659–669 (NNTNSSSPLMN) are compositionally biased toward polar residues. The segment covering 670–690 (QQQQYYHQQQHQQQVTQSSLY) has biased composition (low complexity).

This sequence belongs to the cyclin family.

Essential for the control of the cell cycle at the G1/S (start) transition. Interacts with the CDC2 protein kinase to form MPF. The sequence is that of G1/S-specific cyclin CCN1 (CCN1) from Candida albicans (strain WO-1) (Yeast).